A 311-amino-acid chain; its full sequence is Aspartate carbamoyltransferase catalytic subunit (311 aa).

The carbamoyl phosphate site is built by R59 and T60. Position 87 (K87) interacts with L-aspartate. Carbamoyl phosphate-binding residues include R109, H139, and Q142. Residues R172 and R224 each contribute to the L-aspartate site. A265 and P266 together coordinate carbamoyl phosphate.

The protein belongs to the aspartate/ornithine carbamoyltransferase superfamily. ATCase family. Heterododecamer (2C3:3R2) of six catalytic PyrB chains organized as two trimers (C3), and six regulatory PyrI chains organized as three dimers (R2).

It carries out the reaction carbamoyl phosphate + L-aspartate = N-carbamoyl-L-aspartate + phosphate + H(+). The protein operates within pyrimidine metabolism; UMP biosynthesis via de novo pathway; (S)-dihydroorotate from bicarbonate: step 2/3. Functionally, catalyzes the condensation of carbamoyl phosphate and aspartate to form carbamoyl aspartate and inorganic phosphate, the committed step in the de novo pyrimidine nucleotide biosynthesis pathway. The sequence is that of Aspartate carbamoyltransferase catalytic subunit from Streptococcus equi subsp. equi (strain 4047).